We begin with the raw amino-acid sequence, 89 residues long: Large ribosomal subunit protein eL34 (89 aa).

This sequence belongs to the eukaryotic ribosomal protein eL34 family.

In Methanococcus vannielii (strain ATCC 35089 / DSM 1224 / JCM 13029 / OCM 148 / SB), this protein is Large ribosomal subunit protein eL34.